Consider the following 320-residue polypeptide: Methionyl-tRNA formyltransferase (320 aa).

Residue 117–120 (SLLP) participates in (6S)-5,6,7,8-tetrahydrofolate binding.

The protein belongs to the Fmt family.

The enzyme catalyses L-methionyl-tRNA(fMet) + (6R)-10-formyltetrahydrofolate = N-formyl-L-methionyl-tRNA(fMet) + (6S)-5,6,7,8-tetrahydrofolate + H(+). In terms of biological role, attaches a formyl group to the free amino group of methionyl-tRNA(fMet). The formyl group appears to play a dual role in the initiator identity of N-formylmethionyl-tRNA by promoting its recognition by IF2 and preventing the misappropriation of this tRNA by the elongation apparatus. This Bordetella petrii (strain ATCC BAA-461 / DSM 12804 / CCUG 43448) protein is Methionyl-tRNA formyltransferase.